The following is a 232-amino-acid chain: Large ribosomal subunit protein uL1 (232 aa).

This sequence belongs to the universal ribosomal protein uL1 family. Part of the 50S ribosomal subunit.

Functionally, binds directly to 23S rRNA. The L1 stalk is quite mobile in the ribosome, and is involved in E site tRNA release. In terms of biological role, protein L1 is also a translational repressor protein, it controls the translation of the L11 operon by binding to its mRNA. This chain is Large ribosomal subunit protein uL1, found in Chlamydia caviae (strain ATCC VR-813 / DSM 19441 / 03DC25 / GPIC) (Chlamydophila caviae).